The primary structure comprises 168 residues: MVIPNLHNSIPICGKCDPKLTNSFIGIVLFLAVLIIGILILILFYYNKEINKNSSQYLPIHSPGSGNPSPSSSFLINNNNNNNNYHQNNNSNNNNIIYNPYYNSSTTSPYYLSPNSNHNPSLILYHQSRLLGNIHSINSINNNNNNNNNNPPTNISNKLNKNGETKNI.

A helical membrane pass occupies residues 24–44 (FIGIVLFLAVLIIGILILILF). Disordered stretches follow at residues 69–92 (SPSS…NNSN) and 142–168 (NNNN…TKNI). A compositionally biased stretch (low complexity) spans 142 to 157 (NNNNNNNNNPPTNISN).

It localises to the membrane. This is an uncharacterized protein from Dictyostelium discoideum (Social amoeba).